The primary structure comprises 1070 residues: DNA-directed RNA polymerase subunit beta (1070 aa).

Belongs to the RNA polymerase beta chain family. In terms of assembly, in plastids the minimal PEP RNA polymerase catalytic core is composed of four subunits: alpha, beta, beta', and beta''. When a (nuclear-encoded) sigma factor is associated with the core the holoenzyme is formed, which can initiate transcription.

The protein localises to the plastid. It catalyses the reaction RNA(n) + a ribonucleoside 5'-triphosphate = RNA(n+1) + diphosphate. Functionally, DNA-dependent RNA polymerase catalyzes the transcription of DNA into RNA using the four ribonucleoside triphosphates as substrates. The protein is DNA-directed RNA polymerase subunit beta of Cuscuta exaltata (Tall dodder).